The sequence spans 252 residues: uncharacterized protein (252 aa).

9–33 provides a ligand contact to NADP(+); that stretch reads LITGGSAGIGLELAKRLLELGNEVI. Residue Ser139 participates in substrate binding. Catalysis depends on Tyr152, which acts as the Proton acceptor.

Belongs to the short-chain dehydrogenases/reductases (SDR) family.

Its subcellular location is the cytoplasm. This is an uncharacterized protein from Bacillus subtilis (strain 168).